We begin with the raw amino-acid sequence, 231 residues long: DNA mismatch repair protein MutH (231 aa).

It belongs to the MutH family.

It localises to the cytoplasm. Its function is as follows. Sequence-specific endonuclease that cleaves unmethylated GATC sequences. It is involved in DNA mismatch repair. This chain is DNA mismatch repair protein MutH, found in Salmonella paratyphi C (strain RKS4594).